The following is a 348-amino-acid chain: 4-hydroxy-3-methylbut-2-enyl diphosphate reductase (348 aa).

C21 lines the [4Fe-4S] cluster pocket. (2E)-4-hydroxy-3-methylbut-2-enyl diphosphate is bound by residues H50 and H86. Dimethylallyl diphosphate contacts are provided by H50 and H86. Isopentenyl diphosphate contacts are provided by H50 and H86. Residue C108 participates in [4Fe-4S] cluster binding. H136 contributes to the (2E)-4-hydroxy-3-methylbut-2-enyl diphosphate binding site. H136 is a dimethylallyl diphosphate binding site. H136 lines the isopentenyl diphosphate pocket. Residue E138 is the Proton donor of the active site. T177 contacts (2E)-4-hydroxy-3-methylbut-2-enyl diphosphate. C207 is a binding site for [4Fe-4S] cluster. (2E)-4-hydroxy-3-methylbut-2-enyl diphosphate-binding residues include S235, S236, N237, and S280. Dimethylallyl diphosphate contacts are provided by S235, S236, N237, and S280. 4 residues coordinate isopentenyl diphosphate: S235, S236, N237, and S280.

This sequence belongs to the IspH family. It depends on [4Fe-4S] cluster as a cofactor.

It carries out the reaction isopentenyl diphosphate + 2 oxidized [2Fe-2S]-[ferredoxin] + H2O = (2E)-4-hydroxy-3-methylbut-2-enyl diphosphate + 2 reduced [2Fe-2S]-[ferredoxin] + 2 H(+). It catalyses the reaction dimethylallyl diphosphate + 2 oxidized [2Fe-2S]-[ferredoxin] + H2O = (2E)-4-hydroxy-3-methylbut-2-enyl diphosphate + 2 reduced [2Fe-2S]-[ferredoxin] + 2 H(+). It functions in the pathway isoprenoid biosynthesis; dimethylallyl diphosphate biosynthesis; dimethylallyl diphosphate from (2E)-4-hydroxy-3-methylbutenyl diphosphate: step 1/1. Its pathway is isoprenoid biosynthesis; isopentenyl diphosphate biosynthesis via DXP pathway; isopentenyl diphosphate from 1-deoxy-D-xylulose 5-phosphate: step 6/6. Its function is as follows. Catalyzes the conversion of 1-hydroxy-2-methyl-2-(E)-butenyl 4-diphosphate (HMBPP) into a mixture of isopentenyl diphosphate (IPP) and dimethylallyl diphosphate (DMAPP). Acts in the terminal step of the DOXP/MEP pathway for isoprenoid precursor biosynthesis. This Agrobacterium fabrum (strain C58 / ATCC 33970) (Agrobacterium tumefaciens (strain C58)) protein is 4-hydroxy-3-methylbut-2-enyl diphosphate reductase.